A 296-amino-acid polypeptide reads, in one-letter code: MANLNKRPDWIKVKAPNSTEYYNTKDLIKNLRLNTVCEEAACPNIGECWSKKHTTVMILGSVCTRACRFCNVKTGRPDLLDPYEPQRLAEAVQKLNLKHVVITSVDRDDLEDGGASHFAECISEIRKSSPNTTIEILTPDFLRKEGAAEIIANAKPDVFNHNVETVPSLYKTIRPGARYYNSLSLLHNIKKLSPEIFTKSGMMVGLGEEINEVVQVIDDLREAKVDFLTIGQYLQPTKNHAEVAKYVTPEEFKYLERLAKTKGFLMVSASPLTRSSYHADEDFQKLKENYQQKLVS.

Cys37, Cys42, Cys48, Cys63, Cys67, Cys70, and Ser276 together coordinate [4Fe-4S] cluster. A Radical SAM core domain is found at 49–265 (WSKKHTTVMI…ERLAKTKGFL (217 aa)).

This sequence belongs to the radical SAM superfamily. Lipoyl synthase family. [4Fe-4S] cluster is required as a cofactor.

It is found in the cytoplasm. The catalysed reaction is [[Fe-S] cluster scaffold protein carrying a second [4Fe-4S](2+) cluster] + N(6)-octanoyl-L-lysyl-[protein] + 2 oxidized [2Fe-2S]-[ferredoxin] + 2 S-adenosyl-L-methionine + 4 H(+) = [[Fe-S] cluster scaffold protein] + N(6)-[(R)-dihydrolipoyl]-L-lysyl-[protein] + 4 Fe(3+) + 2 hydrogen sulfide + 2 5'-deoxyadenosine + 2 L-methionine + 2 reduced [2Fe-2S]-[ferredoxin]. Its pathway is protein modification; protein lipoylation via endogenous pathway; protein N(6)-(lipoyl)lysine from octanoyl-[acyl-carrier-protein]: step 2/2. Its function is as follows. Catalyzes the radical-mediated insertion of two sulfur atoms into the C-6 and C-8 positions of the octanoyl moiety bound to the lipoyl domains of lipoate-dependent enzymes, thereby converting the octanoylated domains into lipoylated derivatives. The sequence is that of Lipoyl synthase from Rickettsia rickettsii (strain Iowa).